A 1091-amino-acid polypeptide reads, in one-letter code: ATP-dependent helicase/deoxyribonuclease subunit B (1091 aa).

This sequence belongs to the helicase family. AddB/RexB type 2 subfamily. In terms of assembly, heterodimer of AddA and RexB. It depends on Mg(2+) as a cofactor.

Its function is as follows. The heterodimer acts as both an ATP-dependent DNA helicase and an ATP-dependent, dual-direction single-stranded exonuclease. Recognizes the chi site generating a DNA molecule suitable for the initiation of homologous recombination. This subunit has 5' -&gt; 3' nuclease activity but not helicase activity. This is ATP-dependent helicase/deoxyribonuclease subunit B from Streptococcus pneumoniae serotype 19F (strain G54).